The sequence spans 22 residues: Phospholipase A2 (22 aa).

Belongs to the phospholipase A2 family. Group II subfamily. Ca(2+) serves as cofactor. Seven disulfide bonds are present. As to expression, expressed by the venom gland.

The protein resides in the secreted. It carries out the reaction a 1,2-diacyl-sn-glycero-3-phosphocholine + H2O = a 1-acyl-sn-glycero-3-phosphocholine + a fatty acid + H(+). Snake venom phospholipase A2 (PLA2) that inhibits neuromuscular transmission by blocking acetylcholine release from the nerve termini. PLA2 catalyzes the calcium-dependent hydrolysis of the 2-acyl groups in 3-sn-phosphoglycerides. The chain is Phospholipase A2 from Daboia siamensis (Eastern Russel's viper).